The following is a 361-amino-acid chain: Tyrosine--tRNA ligase (361 aa).

Tyr-36, Tyr-162, Gln-166, Asp-169, and Gln-184 together coordinate L-tyrosine. The 'KMSKS' region signature appears at 236 to 240 (KMSKS). An ATP-binding site is contributed by Lys-239.

Belongs to the class-I aminoacyl-tRNA synthetase family. TyrS type 4 subfamily. As to quaternary structure, homodimer.

It is found in the cytoplasm. The catalysed reaction is tRNA(Tyr) + L-tyrosine + ATP = L-tyrosyl-tRNA(Tyr) + AMP + diphosphate + H(+). Its function is as follows. Catalyzes the attachment of tyrosine to tRNA(Tyr) in a two-step reaction: tyrosine is first activated by ATP to form Tyr-AMP and then transferred to the acceptor end of tRNA(Tyr). This chain is Tyrosine--tRNA ligase, found in Saccharolobus islandicus (strain Y.N.15.51 / Yellowstone #2) (Sulfolobus islandicus).